A 350-amino-acid chain; its full sequence is Transmembrane protein 185A (350 aa).

7 helical membrane-spanning segments follow: residues 16-36, 41-61, 81-101, 111-131, 177-197, 211-231, and 240-260; these read LIYACLLLFSVLLALRLDGII, WAVFAPIWLWKLMVIVGASVG, FKAMLIAVGIHLLLLMFEVLV, FWLLVFMPLFFVSPVSVAACV, ILMSFLCLVVLYYIVWSVLFL, ITMALSWMTIVVPLLTFEILL, and AFSCIPIFVPLWLSLITLMAT. Residues 298–350 form a mediates interaction with MAP1B region; the sequence is DLHHEDNEETEETPVPEPPKIAPMFRKKARVVITQSPGKYALPPPKLNIEMPD.

Belongs to the TMEM185 family. As to quaternary structure, interacts with MAP1B.

It localises to the cell projection. Its subcellular location is the dendrite. The protein localises to the membrane. The chain is Transmembrane protein 185A (TMEM185A) from Pongo abelii (Sumatran orangutan).